The primary structure comprises 583 residues: Penicillin-binding protein activator LpoA (583 aa).

The signal sequence occupies residues 1–24; sequence MATILKQKLKTFFVPTAITLLLSA. A lipid anchor (N-palmitoyl cysteine) is attached at C25. A lipid anchor (S-diacylglycerol cysteine) is attached at C25.

The protein belongs to the LpoA family. In terms of assembly, interacts with PBP1a.

It localises to the cell outer membrane. Functionally, regulator of peptidoglycan synthesis that is essential for the function of penicillin-binding protein 1A (PBP1a). In Haemophilus ducreyi (strain 35000HP / ATCC 700724), this protein is Penicillin-binding protein activator LpoA.